Here is a 122-residue protein sequence, read N- to C-terminus: Diacylglycerol kinase (122 aa).

ATP contacts are provided by Arg10 and Tyr17. Residues Arg10, 14–19 (AAGYSW), and 23–26 (RAAW) contribute to the substrate site. Residue Glu29 coordinates ATP. A divalent metal cation is bound at residue Glu29. Substrate-binding positions include 31–35 (AFRQE), 48–51 (WLDV), Arg56, and Glu70. Residues 35-55 (EGVAVLLAVVIACWLDVDAIT) traverse the membrane as a helical segment. A helical transmembrane segment spans residues 57-77 (VLLISSVMLVMIVEILNSAIE). Residue Glu70 is the Proton acceptor of the active site. Residues Glu77, 86 to 88 (EYH), and 95 to 96 (KD) contribute to the ATP site. Glu77 serves as a coordination point for a divalent metal cation. Residues 98–118 (GSAAVLIAIIVAVITWCILLW) traverse the membrane as a helical segment. Substrate is bound by residues Ser99 and 113–118 (WCILLW).

Belongs to the bacterial diacylglycerol kinase family. The cofactor is Mg(2+).

The protein localises to the cell inner membrane. It carries out the reaction a 1,2-diacyl-sn-glycerol + ATP = a 1,2-diacyl-sn-glycero-3-phosphate + ADP + H(+). Functionally, catalyzes the ATP-dependent phosphorylation of sn-l,2-diacylglycerol (DAG) to phosphatidic acid. Involved in the recycling of diacylglycerol produced as a by-product during membrane-derived oligosaccharide (MDO) biosynthesis. In Shigella flexneri, this protein is Diacylglycerol kinase (dgkA).